A 420-amino-acid chain; its full sequence is Transcription factor TCP4 (420 aa).

Residues 1–27 (MSDDQFHHPPPPSSMRHRSTSDAADGG) are disordered. One can recognise a TCP domain in the interval 45 to 103 (RKDRHSKVCTAKGPRDRRVRLSAHTAIQFYDVQDRLGFDRPSKAVDWLIKKAKTSIDEL). Disordered stretches follow at residues 121–176 (NAKP…PSMD), 228–256 (LSLQSFPDGPPSLLHHQHHHHTSASASEP), 353–379 (HQSISTDDLNHHHHLPPPVHQSAIPGI), and 399–420 (QEEEQHDGLTHKPSSASSISRH). Over residues 410–420 (KPSSASSISRH) the composition is skewed to polar residues.

In terms of assembly, interacts with AHL27 and AHL29. Interacts with SPL. Interacts with JGB. Interacts with GI (via N-terminus). Expressed in cotyledons, particularly in the vascular region, in leaves, roots, buds, flowers and immature siliques.

The protein resides in the nucleus. Its function is as follows. Transcription factor playing a pivotal role in the control of morphogenesis of shoot organs by negatively regulating the expression of boundary-specific genes such as CUC genes, probably through the induction of miRNA (e.g. miR164). Required during early steps of embryogenesis. Participates in ovule development. Activates LOX2 expression by binding to the 5'-GGACCA-3' motif found in its promoter. Activates YUC5 transcription by binding to the 5'-GTGGGCCA-3' motif found in its promoter. Through the activation of YUC5 transcription, integrates the auxin response to a brassinosteroid-dependent molecular circuit that promotes cell elongation in hypocotyls. Activates GIS transcription by binding to the 5'-TGGTCC-3' motif found in its promoter. Involved in the regulation of trichome branching through the activation of GIS transcription. Activates CO transcription by binding to the 5'-GGACCAC-3' motif found in its promoter. Involved in the regulation of photoperiodic flowering through the activation of CO transcription. Activates TCL1 and TCL2 transcription by binding to the 5'-TGGCCA-3' and 5'-GTGGACCA-3' motifS found in their respective promoters. Involved in the suppression of trichome initiaition through the activation of TCL1 and TCL2 transcription. Activates HAT2 transcription by binding to the 5'-TGGTCCAC-3' motif found in its promoter. Through the activation of HAT2 transcription, involved in the auxin-independent reprogramming of mitotic cells to exit division and acquire differentiation competence within the transition zone. The chain is Transcription factor TCP4 (TCP4) from Arabidopsis thaliana (Mouse-ear cress).